The sequence spans 178 residues: ATP-dependent protease subunit HslV (178 aa).

The active site involves Thr-7. Positions 162, 165, and 168 each coordinate Na(+).

It belongs to the peptidase T1B family. HslV subfamily. As to quaternary structure, a double ring-shaped homohexamer of HslV is capped on each side by a ring-shaped HslU homohexamer. The assembly of the HslU/HslV complex is dependent on binding of ATP.

Its subcellular location is the cytoplasm. The catalysed reaction is ATP-dependent cleavage of peptide bonds with broad specificity.. Its activity is regulated as follows. Allosterically activated by HslU binding. In terms of biological role, protease subunit of a proteasome-like degradation complex believed to be a general protein degrading machinery. This chain is ATP-dependent protease subunit HslV, found in Burkholderia cenocepacia (strain ATCC BAA-245 / DSM 16553 / LMG 16656 / NCTC 13227 / J2315 / CF5610) (Burkholderia cepacia (strain J2315)).